The chain runs to 105 residues: MAPKVQQTKAAKAAAALAGGKKGKKKWNKGKVKDKAQHIVILDQEKYDRILKDVPTYKYVSVSVLVDRLKIGGSLARVALRQLEEDGIITPVLKHSKQAIYTRAQ.

The protein belongs to the eukaryotic ribosomal protein eS25 family. Component of the small ribosomal subunit. Mature ribosomes consist of a small (40S) and a large (60S) subunit. The 40S subunit contains about 32 different proteins and 1 molecule of RNA (18S). The 60S subunit contains 45 different proteins and 3 molecules of RNA (25S, 5.8S and 5S).

The protein resides in the cytoplasm. Its function is as follows. Component of the ribosome, a large ribonucleoprotein complex responsible for the synthesis of proteins in the cell. The small ribosomal subunit (SSU) binds messenger RNAs (mRNAs) and translates the encoded message by selecting cognate aminoacyl-transfer RNA (tRNA) molecules. The large subunit (LSU) contains the ribosomal catalytic site termed the peptidyl transferase center (PTC), which catalyzes the formation of peptide bonds, thereby polymerizing the amino acids delivered by tRNAs into a polypeptide chain. The nascent polypeptides leave the ribosome through a tunnel in the LSU and interact with protein factors that function in enzymatic processing, targeting, and the membrane insertion of nascent chains at the exit of the ribosomal tunnel. The chain is Small ribosomal subunit protein eS25 (RPS25B) from Candida albicans (strain SC5314 / ATCC MYA-2876) (Yeast).